The following is a 1367-amino-acid chain: DNA-directed RNA polymerase subunit beta' (1367 aa).

A disordered region spans residues 1–34 (MTSTSPKSRKSSSKRKGSKKKAARSKNVIPPLSK). Residues 7–24 (KSRKSSSKRKGSKKKAAR) are compositionally biased toward basic residues. Positions 250, 317, 324, and 327 each coordinate Zn(2+). Residues 1306-1367 (SVLDDPSDAD…LQEEGLLSDE (62 aa)) form a disordered region. Positions 1355 to 1367 (LEGLQEEGLLSDE) are enriched in low complexity.

This sequence belongs to the RNA polymerase beta' chain family. RpoC2 subfamily. In terms of assembly, in cyanobacteria the RNAP catalytic core is composed of 2 alpha, 1 beta, 1 beta', 1 gamma and 1 omega subunit. When a sigma factor is associated with the core the holoenzyme is formed, which can initiate transcription. Zn(2+) serves as cofactor.

It catalyses the reaction RNA(n) + a ribonucleoside 5'-triphosphate = RNA(n+1) + diphosphate. Functionally, DNA-dependent RNA polymerase catalyzes the transcription of DNA into RNA using the four ribonucleoside triphosphates as substrates. In Prochlorococcus marinus (strain SARG / CCMP1375 / SS120), this protein is DNA-directed RNA polymerase subunit beta'.